A 148-amino-acid chain; its full sequence is Lysozyme C (148 aa).

An N-terminal signal peptide occupies residues methionine 1–glycine 18. The C-type lysozyme domain maps to lysine 19–valine 148. Disulfide bonds link cysteine 24-cysteine 146, cysteine 48-cysteine 134, cysteine 83-cysteine 99, and cysteine 95-cysteine 113. Catalysis depends on residues glutamate 53 and aspartate 71.

Belongs to the glycosyl hydrolase 22 family. Monomer.

It catalyses the reaction Hydrolysis of (1-&gt;4)-beta-linkages between N-acetylmuramic acid and N-acetyl-D-glucosamine residues in a peptidoglycan and between N-acetyl-D-glucosamine residues in chitodextrins.. In terms of biological role, lysozymes have primarily a bacteriolytic function; those in tissues and body fluids are associated with the monocyte-macrophage system and enhance the activity of immunoagents. In Gorilla gorilla gorilla (Western lowland gorilla), this protein is Lysozyme C (LYZ).